The following is a 325-amino-acid chain: Elongation factor P--(R)-beta-lysine ligase (325 aa).

76 to 78 (SPE) contacts substrate. ATP is bound by residues 100-102 (RNE) and asparagine 109. Position 118 (tyrosine 118) interacts with substrate. 244–245 (EL) serves as a coordination point for ATP. Glutamate 251 contributes to the substrate binding site. Glycine 300 lines the ATP pocket.

It belongs to the class-II aminoacyl-tRNA synthetase family. EpmA subfamily. Homodimer.

It catalyses the reaction D-beta-lysine + L-lysyl-[protein] + ATP = N(6)-((3R)-3,6-diaminohexanoyl)-L-lysyl-[protein] + AMP + diphosphate + H(+). In terms of biological role, with EpmB is involved in the beta-lysylation step of the post-translational modification of translation elongation factor P (EF-P) on 'Lys-34'. Catalyzes the ATP-dependent activation of (R)-beta-lysine produced by EpmB, forming a lysyl-adenylate, from which the beta-lysyl moiety is then transferred to the epsilon-amino group of EF-P 'Lys-34'. In Salmonella agona (strain SL483), this protein is Elongation factor P--(R)-beta-lysine ligase.